The chain runs to 183 residues: MTSSLPTVQRVIQNALEVSQLKYSQHPRPGGAPPALIVELPGERKLKINTILSVGEHSVRVEAFVCRKPDENREDVYRFLLRRNRRLYGVAYTLDNVGDIYLVGQMALSAVDADEVDRVLGQVLEVVDSDFNALLELGFRSSIQREWQWRLSRGESLQNLQAFAHLRPTTMQSAQRDEKELGG.

It to M.leprae ML2442.

This is an uncharacterized protein from Mycobacterium tuberculosis (strain CDC 1551 / Oshkosh).